A 96-amino-acid chain; its full sequence is Large ribosomal subunit protein uL23 (96 aa).

It belongs to the universal ribosomal protein uL23 family. Part of the 50S ribosomal subunit. Contacts protein L29, and trigger factor when it is bound to the ribosome.

One of the early assembly proteins it binds 23S rRNA. One of the proteins that surrounds the polypeptide exit tunnel on the outside of the ribosome. Forms the main docking site for trigger factor binding to the ribosome. In Caldicellulosiruptor saccharolyticus (strain ATCC 43494 / DSM 8903 / Tp8T 6331), this protein is Large ribosomal subunit protein uL23.